The sequence spans 402 residues: Phosphomevalonate dehydratase large subunit (402 aa).

Positions 48, 49, 50, 79, and 80 each coordinate (R)-5-phosphomevalonate. C122 serves as a coordination point for [4Fe-4S] cluster. (R)-5-phosphomevalonate-binding residues include E145 and S146. Residues C297 and C356 each coordinate [4Fe-4S] cluster. K377 serves as a coordination point for (R)-5-phosphomevalonate.

This sequence belongs to the AcnX type II large subunit family. Heterodimer composed of a large subunit (PMDh-L) and a small subunit (PMDh-S). The cofactor is [4Fe-4S] cluster.

The catalysed reaction is (R)-5-phosphomevalonate = (2E)-3-methyl-5-phosphooxypent-2-enoate + H2O. It participates in isoprenoid biosynthesis; isopentenyl diphosphate biosynthesis via mevalonate pathway. With respect to regulation, neither the addition of 1 mM Mg(2+) nor 1 mM Mn(2+) has a significant effect on the activity, whereas Zn(2+) causes almost complete inactivation. Strongly inhibited by H(2)O(2), but not by EDTA or iodoacetamide. Component of a hydro-lyase that catalyzes the dehydration of mevalonate 5-phosphate (MVA5P) to form trans-anhydromevalonate 5-phosphate (tAHMP). Involved in the archaeal mevalonate (MVA) pathway, which provides fundamental precursors for isoprenoid biosynthesis, such as isopentenyl diphosphate (IPP) and dimethylallyl diphosphate (DMAPP). The sequence is that of Phosphomevalonate dehydratase large subunit from Aeropyrum pernix (strain ATCC 700893 / DSM 11879 / JCM 9820 / NBRC 100138 / K1).